Here is a 43-residue protein sequence, read N- to C-terminus: METATLIAIFISCSLVSFTGYALYTAFGQPSKELRDPFEEHED.

A helical membrane pass occupies residues 5–27 (TLIAIFISCSLVSFTGYALYTAF).

The protein belongs to the PsbN family.

It is found in the plastid. Its subcellular location is the chloroplast thylakoid membrane. In terms of biological role, may play a role in photosystem I and II biogenesis. In Lopidium concinnum (Moss), this protein is Protein PsbN.